A 313-amino-acid chain; its full sequence is Trimeric intracellular cation channel type 1B.2 (313 aa).

At 1–28 (MGWVPDEWSIDHDTLIDAGGYVQKLKLY) the chain is on the lumenal side. A helical transmembrane segment spans residues 29–48 (PYFDAAHYVLTCLSVRHDLG). Over 49-57 (PDAISFSRK) the chain is Cytoplasmic. A discontinuously helical transmembrane segment spans residues 58-82 (HPFSCWLSCMLMSFAGSFLSCFLLG). Residues 83–90 (EPIISPLK) lie on the Lumenal side of the membrane. Residues 91–108 (QHADILLGSIVWYLVFYS) form a helical membrane-spanning segment. Residues 109 to 118 (PFDVVFRLAT) lie on the Cytoplasmic side of the membrane. Residues 119–149 (WFPVKLGLSVLKEVQRTHKIAAGVKHAVRIY) form a helical membrane-spanning segment. The a 1,2-diacyl-sn-glycero-3-phospho-(1D-myo-inositol-4,5-bisphosphate) site is built by Lys-130 and Arg-134. The Lumenal portion of the chain corresponds to 150–151 (PE). The discontinuously helical transmembrane segment at 152 to 178 (SYLVQILVGVAKGAGSGVVKIVEQLAR) threads the bilayer. Gly-168 is an a 1,2-diacyl-sn-glycero-3-phospho-(1D-myo-inositol-4,5-bisphosphate) binding site. Over 179–192 (GTWHPTNHEILRPS) the chain is Cytoplasmic. The chain crosses the membrane as a helical span at residues 193 to 210 (FTTKACVIASIVFTLERH). Topologically, residues 211–216 (SMYVTA) are lumenal. A helical transmembrane segment spans residues 217-239 (PHDLVYLCVVGFFIYFKLASLCL). Topologically, residues 240 to 313 (SVHDVLMPIE…MSNGTDKKNN (74 aa)) are cytoplasmic.

The protein belongs to the TMEM38 family. As to quaternary structure, homotrimer; trimerization probably requires binding to phosphatidylinositol 4,5-bisphosphate (PIP2).

The protein localises to the endoplasmic reticulum membrane. In terms of biological role, potassium channel that mediates transmembrane potassium transport. Might be required for maintenance of rapid intracellular calcium release. May act as a potassium counter-ion channel that functions in synchronization with calcium release from intracellular stores. Binds phosphatidylinositol 4,5-bisphosphate (PIP2). This Caenorhabditis elegans protein is Trimeric intracellular cation channel type 1B.2.